The primary structure comprises 229 residues: MTTVRIPAGWPATEEEARAVQDELRGRVILDEPGPPPGTGRVTGVDVAYDDERDVVVAAAVVLDAATLDVVAEATAVGEVSFPYVPGLLAFREIPTVLAALDALPCPPGLIVCDGYGVAHPRRFGLASHLGVLTGLPTIGVAKNPFTFSYEDPGAPRGSAAPLLAGADEVGRALRTQSGVKPVFVSVGHRVDLDHACAHTLALTPKYRIPETTRRADSLCRRALKEATA.

Residues D46 and D114 each contribute to the Mg(2+) site.

It belongs to the endonuclease V family. The cofactor is Mg(2+).

It is found in the cytoplasm. The enzyme catalyses Endonucleolytic cleavage at apurinic or apyrimidinic sites to products with a 5'-phosphate.. DNA repair enzyme involved in the repair of deaminated bases. Selectively cleaves double-stranded DNA at the second phosphodiester bond 3' to a deoxyinosine leaving behind the intact lesion on the nicked DNA. The sequence is that of Endonuclease V from Streptomyces avermitilis (strain ATCC 31267 / DSM 46492 / JCM 5070 / NBRC 14893 / NCIMB 12804 / NRRL 8165 / MA-4680).